The primary structure comprises 208 residues: Bacitracin transport permease protein BCRB (208 aa).

Helical transmembrane passes span 23–43 (LYIV…YLFN), 70–90 (VLLL…TLLF), 111–131 (FMIG…VTLL), 135–155 (YVPT…VYGT), 159–179 (ALFP…PEYP), and 182–202 (YSFI…IVYF).

It is found in the cell membrane. In terms of biological role, part of the binding-protein-dependent transport system for bacitracin that confer resistance to this antibiotic; probably responsible for the translocation of the substrate across the membrane. The polypeptide is Bacitracin transport permease protein BCRB (bcrB) (Bacillus licheniformis).